The chain runs to 245 residues: Probable 2-phosphosulfolactate phosphatase (245 aa).

The protein belongs to the ComB family. It depends on Mg(2+) as a cofactor.

It carries out the reaction (2R)-O-phospho-3-sulfolactate + H2O = (2R)-3-sulfolactate + phosphate. This chain is Probable 2-phosphosulfolactate phosphatase, found in Trichormus variabilis (strain ATCC 29413 / PCC 7937) (Anabaena variabilis).